Reading from the N-terminus, the 287-residue chain is Eukaryotic translation initiation factor 3 subunit G (287 aa).

Disordered regions lie at residues 1–34 (MSKL…KDGT) and 159–184 (TAGG…YVPP). In terms of domain architecture, RRM spans 207–285 (ATLRVTNVSE…LILRVEFAKR (79 aa)).

This sequence belongs to the eIF-3 subunit G family. In terms of assembly, component of the eukaryotic translation initiation factor 3 (eIF-3) complex.

The protein localises to the cytoplasm. Its function is as follows. RNA-binding component of the eukaryotic translation initiation factor 3 (eIF-3) complex, which is involved in protein synthesis of a specialized repertoire of mRNAs and, together with other initiation factors, stimulates binding of mRNA and methionyl-tRNAi to the 40S ribosome. The eIF-3 complex specifically targets and initiates translation of a subset of mRNAs involved in cell proliferation. This subunit can bind 18S rRNA. The protein is Eukaryotic translation initiation factor 3 subunit G (tif35) of Aspergillus oryzae (strain ATCC 42149 / RIB 40) (Yellow koji mold).